The chain runs to 277 residues: Carbonyl reductase [NADPH] 1 (277 aa).

The residue at position 2 (S2) is an N-acetylserine. 2 positions are modified to phosphoserine: S2 and S30. Residues 10 to 34 (VTGA…GDVV), 63 to 64 (DI), and N90 each bind NADP(+). Residues 95-97 (FKT) and Q106 each bind glutathione. S140 is a substrate binding site. 193 to 194 (AY) serves as a coordination point for glutathione. Y194 functions as the Proton acceptor in the catalytic mechanism. NADP(+)-binding positions include 194-198 (YGVTK) and 231-233 (VRT). K239 carries the N6-1-carboxyethyl lysine modification.

It belongs to the short-chain dehydrogenases/reductases (SDR) family. In terms of assembly, monomer.

Its subcellular location is the cytoplasm. The enzyme catalyses a secondary alcohol + NADP(+) = a ketone + NADPH + H(+). It catalyses the reaction prostaglandin F2alpha + NADP(+) = prostaglandin E2 + NADPH + H(+). The catalysed reaction is prostaglandin E1 + NADP(+) = 15-oxoprostaglandin E1 + NADPH + H(+). It carries out the reaction menadione + NADPH + H(+) = menadiol + NADP(+). The enzyme catalyses prostaglandin D2 + NADP(+) = 15-oxoprostaglandin D2 + NADPH + H(+). It catalyses the reaction prostaglandin E2 + NADP(+) = 15-oxoprostaglandin E2 + NADPH + H(+). The catalysed reaction is prostaglandin F2alpha + NADP(+) = 15-oxoprostaglandin F2alpha + NADPH + H(+). It carries out the reaction daunorubicin + NADPH + H(+) = 13-dihydrodaunorubicin + NADP(+). The enzyme catalyses S-nitrosoglutathione + NADPH + H(+) = S-(hydroxysulfenamide)glutathione + NADP(+). It catalyses the reaction a primary alcohol + NADP(+) = an aldehyde + NADPH + H(+). The catalysed reaction is cortisol + NADPH + H(+) = 20beta-dihydrocortisol + NADP(+). It carries out the reaction corticosterone + NADPH + H(+) = 20beta-dihydrocorticosterone + NADP(+). NADPH-dependent reductase with broad substrate specificity. Catalyzes the reduction of a wide variety of carbonyl compounds including quinones, prostaglandins, menadione, plus various xenobiotics. Catalyzes the reduction of the antitumor anthracyclines doxorubicin and daunorubicin to the cardiotoxic compounds doxorubicinol and daunorubicinol. Can convert prostaglandin E to prostaglandin F2-alpha. Can bind glutathione, which explains its higher affinity for glutathione-conjugated substrates. Catalyzes the reduction of S-nitrosoglutathione. In addition, participates in the glucocorticoid metabolism by catalyzing the NADPH-dependent cortisol/corticosterone into 20beta-dihydrocortisol (20b-DHF) or 20beta-corticosterone (20b-DHB), which are weak agonists of NR3C1 and NR3C2 in adipose tissue. The chain is Carbonyl reductase [NADPH] 1 from Bos taurus (Bovine).